The following is a 275-amino-acid chain: Large ribosomal subunit protein uL2 (275 aa).

Disordered regions lie at residues 38 to 59 (TRGS…GGHK) and 223 to 275 (VAMN…RKRK). The segment covering 50–59 (TVRHRGGGHK) has biased composition (basic residues). Positions 229–244 (DHPHGGGEGRTGEARE) are enriched in basic and acidic residues.

This sequence belongs to the universal ribosomal protein uL2 family. As to quaternary structure, part of the 50S ribosomal subunit. Forms a bridge to the 30S subunit in the 70S ribosome.

One of the primary rRNA binding proteins. Required for association of the 30S and 50S subunits to form the 70S ribosome, for tRNA binding and peptide bond formation. It has been suggested to have peptidyltransferase activity; this is somewhat controversial. Makes several contacts with the 16S rRNA in the 70S ribosome. This chain is Large ribosomal subunit protein uL2, found in Bordetella bronchiseptica (strain ATCC BAA-588 / NCTC 13252 / RB50) (Alcaligenes bronchisepticus).